Here is a 387-residue protein sequence, read N- to C-terminus: Cystathionine gamma-lyase (387 aa).

Substrate contacts are provided by R53, Y105, and R110. K202 bears the N6-(pyridoxal phosphate)lysine mark. Position 329 (E329) interacts with substrate.

Belongs to the trans-sulfuration enzymes family. As to quaternary structure, homotetramer. Interacts with CALM in a calcium-dependent manner. The cofactor is pyridoxal 5'-phosphate.

It is found in the cytoplasm. The enzyme catalyses L,L-cystathionine + H2O = 2-oxobutanoate + L-cysteine + NH4(+). The catalysed reaction is L-cysteine + H2O = hydrogen sulfide + pyruvate + NH4(+) + H(+). It carries out the reaction L-homocysteine + H2O = 2-oxobutanoate + hydrogen sulfide + NH4(+) + H(+). It catalyses the reaction L-homoserine = 2-oxobutanoate + NH4(+). Its pathway is amino-acid biosynthesis; L-cysteine biosynthesis; L-cysteine from L-homocysteine and L-serine: step 2/2. Its function is as follows. Catalyzes the last step in the trans-sulfuration pathway from L-methionine to L-cysteine in a pyridoxal-5'-phosphate (PLP)-dependent manner, which consists on cleaving the L,L-cystathionine molecule into L-cysteine, ammonia and 2-oxobutanoate. Part of the L-cysteine derived from the trans-sulfuration pathway is utilized for biosynthesis of the ubiquitous antioxidant glutathione. Besides its role in the conversion of L-cystathionine into L-cysteine, it utilizes L-cysteine and L-homocysteine as substrates (at much lower rates than L,L-cystathionine) to produce the endogenous gaseous signaling molecule hydrogen sulfide (H2S). This chain is Cystathionine gamma-lyase (cysA), found in Dictyostelium discoideum (Social amoeba).